Reading from the N-terminus, the 371-residue chain is Cytochrome b (371 aa).

A run of 4 helical transmembrane segments spans residues 25–45, 69–90, 105–125, and 170–190; these read FGSM…FLAV, WMMQ…YIHI, WLSG…GYVL, and FSAL…LHIM. Heme b contacts are provided by His75 and His89. His174 and His188 together coordinate heme b. His193 contributes to the a ubiquinone binding site. The next 4 helical transmembrane spans lie at 218-238, 280-300, 312-332, and 339-358; these read YKDL…VSFL, LGGA…PFTH, IMQL…WSAT, and FTVI…IMNP.

The protein belongs to the cytochrome b family. In terms of assembly, the cytochrome bc1 complex contains 3 respiratory subunits (MT-CYB, CYC1 and UQCRFS1), 2 core proteins (UQCRC1 and UQCRC2) and probably 6 low-molecular weight proteins. It depends on heme b as a cofactor.

It is found in the mitochondrion inner membrane. Component of the ubiquinol-cytochrome c reductase complex (complex III or cytochrome b-c1 complex) that is part of the mitochondrial respiratory chain. The b-c1 complex mediates electron transfer from ubiquinol to cytochrome c. Contributes to the generation of a proton gradient across the mitochondrial membrane that is then used for ATP synthesis. In Eryx elegans (Central Asian sand boa), this protein is Cytochrome b (MT-CYB).